The following is a 622-amino-acid chain: Matrilin-4 (622 aa).

Residues 1–18 form the signal peptide; sequence MRGLLCWPVLLLLLQPWE. A VWFA 1 domain is found at 34–213; it reads DLVFVIDSSR…EFGLQFQSRL (180 aa). Residue Asn-69 is glycosylated (N-linked (GlcNAc...) asparagine). Residues 215 to 255 enclose the EGF-like 1; incomplete domain; the sequence is GKDQCAEGGHGCQHQCVNAWAMFHCTCNPGYKLAADNKSCL. Intrachain disulfides connect Cys-219-Cys-230, Cys-226-Cys-239, Cys-241-Cys-254, Cys-260-Cys-271, Cys-267-Cys-280, Cys-282-Cys-295, Cys-301-Cys-312, Cys-308-Cys-321, Cys-323-Cys-336, Cys-342-Cys-353, Cys-349-Cys-362, and Cys-364-Cys-377. Asn-251 is a glycosylation site (N-linked (GlcNAc...) asparagine). 3 EGF-like domains span residues 256–292, 297–337, and 342–377; these read AIDLCAEGTHGCEHHCVNSPGSYFCHCQVGFVLQQDQ, AIDY…RSCQ, and CNGVDHGCEFQCVSEGLSYRCLCPEGRQLQADGKSC. Residue Asn-305 is glycosylated (N-linked (GlcNAc...) asparagine). The 176-residue stretch at 386-561 folds into the VWFA 2 domain; sequence DLVLLVDGSK…GTMTHLLENL (176 aa). The stretch at 591–622 forms a coiled coil; it reads GRTLGALESLTLNLAQLTARLEDLENQLANQK.

Interacts with COMP. Embryonic kidney, lung and placenta.

The protein resides in the secreted. Its function is as follows. Major component of the extracellular matrix of cartilage. The polypeptide is Matrilin-4 (MATN4) (Homo sapiens (Human)).